We begin with the raw amino-acid sequence, 576 residues long: Probable DNA ligase (576 aa).

Glutamate 235 contacts ATP. Lysine 237 acts as the N6-AMP-lysine intermediate in catalysis. Arginine 242, arginine 257, glutamate 285, phenylalanine 324, arginine 422, and lysine 428 together coordinate ATP.

It belongs to the ATP-dependent DNA ligase family. Mg(2+) is required as a cofactor.

It catalyses the reaction ATP + (deoxyribonucleotide)n-3'-hydroxyl + 5'-phospho-(deoxyribonucleotide)m = (deoxyribonucleotide)n+m + AMP + diphosphate.. In terms of biological role, DNA ligase that seals nicks in double-stranded DNA during DNA replication, DNA recombination and DNA repair. This Koribacter versatilis (strain Ellin345) protein is Probable DNA ligase.